We begin with the raw amino-acid sequence, 264 residues long: Thymidylate synthase (264 aa).

Arg21 contacts dUMP. His51 contributes to the (6R)-5,10-methylene-5,6,7,8-tetrahydrofolate binding site. 126–127 (RR) contacts dUMP. Cys146 serves as the catalytic Nucleophile. Residues 166–169 (RSAD), Asn177, and 207–209 (HLY) each bind dUMP. Asp169 serves as a coordination point for (6R)-5,10-methylene-5,6,7,8-tetrahydrofolate. A (6R)-5,10-methylene-5,6,7,8-tetrahydrofolate-binding site is contributed by Ala263.

This sequence belongs to the thymidylate synthase family. Bacterial-type ThyA subfamily. In terms of assembly, homodimer.

The protein localises to the cytoplasm. It carries out the reaction dUMP + (6R)-5,10-methylene-5,6,7,8-tetrahydrofolate = 7,8-dihydrofolate + dTMP. Its pathway is pyrimidine metabolism; dTTP biosynthesis. Functionally, catalyzes the reductive methylation of 2'-deoxyuridine-5'-monophosphate (dUMP) to 2'-deoxythymidine-5'-monophosphate (dTMP) while utilizing 5,10-methylenetetrahydrofolate (mTHF) as the methyl donor and reductant in the reaction, yielding dihydrofolate (DHF) as a by-product. This enzymatic reaction provides an intracellular de novo source of dTMP, an essential precursor for DNA biosynthesis. The sequence is that of Thymidylate synthase from Alkalilimnicola ehrlichii (strain ATCC BAA-1101 / DSM 17681 / MLHE-1).